The following is a 619-amino-acid chain: Eukaryotic translation initiation factor 2-alpha kinase 1 (619 aa).

Residues 1–40 (MLGGSSVDGERDTDDDAAGAVAAPPAIDFPAEVSDPKYDE) are disordered. The segment covering 18 to 28 (AGAVAAPPAID) has biased composition (low complexity). Residues 85–104 (LHSKQVFKLLCQTFIKMGLL) carry the SIFI-degron motif. The 414-residue stretch at 167 to 580 (FEELAILGKG…ALQLLQSELF (414 aa)) folds into the Protein kinase domain. ATP is bound by residues 173–181 (LGKGGYGRV) and Lys196. Thr283 carries the post-translational modification Phosphothreonine. The stretch at 408 to 413 (ACPYVM) is one HRM 1 repeat. The active-site Proton acceptor is the Asp440. Phosphothreonine; by autocatalysis is present on residues Thr483, Thr485, and Thr490. The stretch at 549-554 (RCPVQA) is one HRM 2 repeat.

Belongs to the protein kinase superfamily. Ser/Thr protein kinase family. GCN2 subfamily. Synthesized in an inactive form that binds to the N-terminal domain of CDC37. Has to be associated with a multiprotein complex containing Hsp90, CDC37 and PPP5C for maturation and activation by autophosphorylation. The phosphatase PPP5C modulates this activation. Homodimer; homodimerizes in presence of heme, forming a disulfide-linked inactive homodimer. Interacts with DELE1; binds both to full-length DELE1 and processed form of DELE1 (S-DELE1) in response to stress, leading to activate its protein kinase activity and trigger the integrated stress response (ISR). In terms of processing, activated by autophosphorylation; phosphorylated predominantly on serine and threonine residues, but also on tyrosine residues. Autophosphorylation at Thr-485 is required for kinase activation. The active autophosphorylated form apparently is largely refractory to cellular heme fluctuations. Post-translationally, ubiquitinated and degraded by the SIFI complex once the mitochondrial stress has been resolved, thereby providing stress response silencing. Within the SIFI complex, UBR4 initiates ubiquitin chain that are further elongated or branched by KCMF1. As to expression, expressed predominantly in erythroid cells, mature reticulocytes, as well as fetal liver nucleated erythroid cells. At much lower levels, expressed in hepatocytes and bone marrow-derived macrophages (at protein level).

It localises to the cytoplasm. The catalysed reaction is L-seryl-[protein] + ATP = O-phospho-L-seryl-[protein] + ADP + H(+). It carries out the reaction L-threonyl-[protein] + ATP = O-phospho-L-threonyl-[protein] + ADP + H(+). In normal conditions, the protein kinase activity is inhibited; inhibition is relieved by various stress conditions. Inhibited by heme: in presence of heme, forms a disulfide-linked inactive homodimer. Heme depletion relieves inhibition and stimulates kinase activity by autophosphorylation. Inhibited by the heme metabolites biliverdin and bilirubin. Induced by oxidative stress generated by arsenite treatment. Binding of nitric oxide (NO) to the heme iron in the N-terminal heme-binding domain activates the kinase activity, while binding of carbon monoxide (CO) suppresses kinase activity. Protein kinase activity is also activated upon binding to DELE1 in response to various stress, triggering the integrated stress response (ISR): activated by full-length DELE1 in response to iron deficiency, while it is activated by the processed form of DELE1 (S-DELE1) in response to mitochondrial stress. Its function is as follows. Metabolic-stress sensing protein kinase that phosphorylates the alpha subunit of eukaryotic translation initiation factor 2 (EIF2S1/eIF-2-alpha) in response to various stress conditions. Key activator of the integrated stress response (ISR) required for adaptation to various stress, such as heme deficiency, oxidative stress, osmotic shock, mitochondrial dysfunction and heat shock. EIF2S1/eIF-2-alpha phosphorylation in response to stress converts EIF2S1/eIF-2-alpha in a global protein synthesis inhibitor, leading to a global attenuation of cap-dependent translation, while concomitantly initiating the preferential translation of ISR-specific mRNAs, such as the transcriptional activator ATF4, and hence allowing ATF4-mediated reprogramming. Acts as a key sensor of heme-deficiency: in normal conditions, binds hemin via a cysteine thiolate and histidine nitrogenous coordination, leading to inhibit the protein kinase activity. This binding occurs with moderate affinity, allowing it to sense the heme concentration within the cell: heme depletion relieves inhibition and stimulates kinase activity, activating the ISR. Thanks to this unique heme-sensing capacity, plays a crucial role to shut off protein synthesis during acute heme-deficient conditions. In red blood cells (RBCs), controls hemoglobin synthesis ensuring a coordinated regulation of the synthesis of its heme and globin moieties. It thereby plays an essential protective role for RBC survival in anemias of iron deficiency. Iron deficiency also triggers activation by full-length DELE1. Also activates the ISR in response to mitochondrial dysfunction: HRI/EIF2AK1 protein kinase activity is activated upon binding to the processed form of DELE1 (S-DELE1), thereby promoting the ATF4-mediated reprogramming. Also acts as an activator of mitophagy in response to mitochondrial damage: catalyzes phosphorylation of eIF-2-alpha (EIF2S1) following activation by S-DELE1, thereby promoting mitochondrial localization of EIF2S1, triggering PRKN-independent mitophagy. This is Eukaryotic translation initiation factor 2-alpha kinase 1 from Mus musculus (Mouse).